Consider the following 215-residue polypeptide: UPF0323 lipoprotein jhp_0217 (215 aa).

The first 27 residues, 1-27, serve as a signal peptide directing secretion; the sequence is MKKPYRKISDYAIVGGLSALVMVSIVG. Residue cysteine 28 is the site of N-palmitoyl cysteine attachment. Cysteine 28 carries S-diacylglycerol cysteine lipidation. The span at 158 to 169 shows a compositional bias: polar residues; it reads QRTYKSPQAYQR. Residues 158 to 215 are disordered; it reads QRTYKSPQAYQRSQNSFSKSAPSASSMGTASKGQSGFFGSSRPTSSPAISSGTRGFNA. Positions 170–183 are enriched in low complexity; the sequence is SQNSFSKSAPSASS. The span at 184-195 shows a compositional bias: polar residues; it reads MGTASKGQSGFF. Low complexity predominate over residues 197-208; that stretch reads SSRPTSSPAISS.

Belongs to the UPF0323 family.

It localises to the cell membrane. This is UPF0323 lipoprotein jhp_0217 from Helicobacter pylori (strain J99 / ATCC 700824) (Campylobacter pylori J99).